Consider the following 398-residue polypeptide: Cation channel sperm-associated protein 3 (398 aa).

At 1–48 the chain is on the cytoplasmic side; sequence MSQHRHQRHSRVISSSPVDTTSVGFCPTFKKFKRNDDECRAFVKRVIM. A helical transmembrane segment spans residues 49-71; it reads SRFFKIIMISTVTSNAFFMALWT. Topologically, residues 72–80 are extracellular; sequence SYDIRYRLF. A helical transmembrane segment spans residues 81–107; the sequence is RLLEFSEIFFVSICTSELSMKVYVDPI. Residue asparagine 108 is a topological domain, cytoplasmic. A helical membrane pass occupies residues 109 to 131; it reads YWKNGYNLLDVIIIIVMFLPYAL. Residues 132 to 143 are Extracellular-facing; the sequence is RQLMGKQFTYLY. A helical membrane pass occupies residues 144–160; it reads IADGMQSLRILKLIGYS. Residues 161–168 are Cytoplasmic-facing; sequence QGIRTLIT. A helical transmembrane segment spans residues 169-195; the sequence is AVGQTVYTVASVLLLLFLLMYIFAILG. The Extracellular portion of the chain corresponds to 196–216; sequence FCLFGSPDNGDHDNWGNLAAA. Residues 217–236 constitute an intramembrane region (helical; Pore-forming); the sequence is FFTLFSLATVDGWTDLQKQL. Over 237–242 the chain is Extracellular; the sequence is DNREFA. The helical transmembrane segment at 243–268 threads the bilayer; sequence LSRAFTIIFILLASFIFLNMFVGVMI. The Cytoplasmic portion of the chain corresponds to 269–398; it reads MHTEDSIRKF…PQSLEKVDEK (130 aa).

It belongs to the cation channel sperm-associated (TC 1.A.1.19) family. As to quaternary structure, component of the CatSper complex or CatSpermasome composed of the core pore-forming members CATSPER1, CATSPER2, CATSPER3 and CATSPER4 as well as auxiliary members CATSPERB, CATSPERG, CATSPERD, CATSPERE, CATSPERZ, C2CD6/CATSPERT, TMEM249, TMEM262 and EFCAB9. HSPA1 may be an additional auxiliary complex member. The core complex members CATSPER1, CATSPER2, CATSPER3 and CATSPER4 form a heterotetrameric channel. The auxiliary CATSPERB, CATSPERG, CATSPERD and CATSPERE subunits form a pavilion-like structure over the pore which stabilizes the complex through interactions with CATSPER4, CATSPER3, CATSPER1 and CATSPER2 respectively. TMEM262/CATSPERH interacts with CATSPERB, further stabilizing the complex. C2CD6/CATSPERT interacts at least with CATSPERD and is required for targeting the CatSper complex in the flagellar membrane. As to expression, testis-specific.

The protein localises to the cell projection. It localises to the cilium. Its subcellular location is the flagellum membrane. The enzyme catalyses Ca(2+)(in) = Ca(2+)(out). Its activity is regulated as follows. The CatSper calcium channel is indirectly activated by extracellular progesterone and prostaglandins following the sequence: progesterone &gt; PGF1-alpha = PGE1 &gt; PGA1 &gt; PGE2 &gt;&gt; PGD2. The CatSper calcium channel is directly inhibited by endocannabinoid 2-arachidonoylglycerol (2AG). Indirect activation by progesterone takes place via the following mechanism: progesterone binds and activates the acylglycerol lipase ABHD2, which in turn mediates hydrolysis of 2AG inhibitor, relieving inhibition of the CatSper channel. The primary effect of progesterone activation is to shift voltage dependence towards more physiological, negative membrane potentials; it is not mediated by metabotropic receptors and second messengers. Sperm capacitation enhances the effect of progesterone by providing additional negative shift. Also activated by the elevation of intracellular pH. Functionally, pore-forming subunit of the CatSper complex, a sperm-specific voltage-gated calcium channel that plays a central role in calcium-dependent physiological responses essential for successful fertilization, such as sperm hyperactivation, acrosome reaction and chemotaxis towards the oocyte. The polypeptide is Cation channel sperm-associated protein 3 (CATSPER3) (Homo sapiens (Human)).